We begin with the raw amino-acid sequence, 169 residues long: uncharacterized protein (169 aa).

Its subcellular location is the mitochondrion. This is an uncharacterized protein from Paramecium tetraurelia.